An 83-amino-acid polypeptide reads, in one-letter code: Large ribosomal subunit protein bL27 (83 aa).

A disordered region spans residues 1 to 21; that stretch reads MAHKRSSGAGRNGRDSNPKYL.

It belongs to the bacterial ribosomal protein bL27 family.

The chain is Large ribosomal subunit protein bL27 from Kosmotoga olearia (strain ATCC BAA-1733 / DSM 21960 / TBF 19.5.1).